The chain runs to 92 residues: Small ribosomal subunit protein uS19c (92 aa).

This sequence belongs to the universal ribosomal protein uS19 family.

Its subcellular location is the plastid. The protein localises to the chloroplast. Its function is as follows. Protein S19 forms a complex with S13 that binds strongly to the 16S ribosomal RNA. This is Small ribosomal subunit protein uS19c (rps19) from Pinus thunbergii (Japanese black pine).